The chain runs to 338 residues: Anthocyanidin reductase ((2S)-flavan-3-ol-forming) (338 aa).

NADP(+)-binding positions include 18-21 (TGFV), Lys48, 87-90 (VATP), and Tyr168.

The protein belongs to the NAD(P)-dependent epimerase/dehydratase family. Dihydroflavonol-4-reductase subfamily. As to expression, expressed in leaves and grape berries.

The enzyme catalyses a (2S,3R)-flavan-3-ol + 2 NADP(+) = an anthocyanidin with a 3-hydroxy group + 2 NADPH + 2 H(+). It carries out the reaction a (2S,3S)-flavan-3-ol + 2 NADP(+) = an anthocyanidin with a 3-hydroxy group + 2 NADPH + 2 H(+). Its pathway is secondary metabolite biosynthesis; flavonoid biosynthesis. Its function is as follows. Produces the terminal flavan-3-ol monomers required for the formation of proanthocyanidins or condensed tannins in leaves and flowers, as well as in the skin and seeds of developing berries. Behaves as a reductase and as a C-3 epimerase. Catalyzes the double reduction of anthocyanidins, producing a mixture of (2S,3S)- and (2S,3R)-flavan-3-ols. The enzyme catalyzes sequential hydride transfers to C-2 and C-4, respectively and epimerization at C-3 is achieved by tautomerization that occurs between the two hydride transfers. Converts cyanidin, pelargonidin and delphinidin into catechin and epicatechin, afzelechin and epiafzelechin, and gallocatechin and epigallocatechin respectively. This chain is Anthocyanidin reductase ((2S)-flavan-3-ol-forming), found in Vitis vinifera (Grape).